A 505-amino-acid polypeptide reads, in one-letter code: AMP phosphorylase (505 aa).

Residues Gly-169, 195 to 200 (SRAITG), and Thr-204 each bind AMP. Residue Asp-257 is the Proton donor of the active site. AMP is bound by residues Ser-265 and Lys-289.

It belongs to the thymidine/pyrimidine-nucleoside phosphorylase family. Type 2 subfamily.

The enzyme catalyses AMP + phosphate = alpha-D-ribose 1,5-bisphosphate + adenine. It carries out the reaction CMP + phosphate = cytosine + alpha-D-ribose 1,5-bisphosphate. It catalyses the reaction UMP + phosphate = alpha-D-ribose 1,5-bisphosphate + uracil. In terms of biological role, catalyzes the conversion of AMP and phosphate to adenine and ribose 1,5-bisphosphate (R15P). Exhibits phosphorylase activity toward CMP and UMP in addition to AMP. Functions in an archaeal AMP degradation pathway, together with R15P isomerase and RubisCO. The protein is AMP phosphorylase of Methanocorpusculum labreanum (strain ATCC 43576 / DSM 4855 / Z).